The following is a 724-amino-acid chain: Golgin subfamily A member 6-like protein 6 (724 aa).

Disordered regions lie at residues 1-108 (MLMW…HQEA), 314-342 (QEEK…MRRQ), 374-454 (MHEQ…EMWR), 517-548 (QEEM…KMWR), and 561-724 (WRQE…MQEH). The segment covering 15–29 (LPTHPHLPTHPHLPT) has biased composition (basic residues). A compositionally biased stretch (basic and acidic residues) spans 39–60 (MSKETRQSKLAEAKEQLTDHHP). Composition is skewed to polar residues over residues 61-71 (QTNPSVGTAAS) and 79-91 (NNGT…TSGG). Positions 94–108 (SPEDEQKASHQHQEA) are enriched in basic and acidic residues. Positions 164 to 686 (ELEQALSAVA…EKMWEQEEKM (523 aa)) form a coiled coil.

Belongs to the GOLGA6 family.

The sequence is that of Golgin subfamily A member 6-like protein 6 (GOLGA6L6) from Homo sapiens (Human).